We begin with the raw amino-acid sequence, 334 residues long: Tryptophan--tRNA ligase (334 aa).

Residues 11 to 13 and 19 to 20 contribute to the ATP site; these read QPS and GN. The 'HIGH' region signature appears at 12–20; sequence PSGELTIGN. Residue Asp-135 participates in L-tryptophan binding. Residues 147–149, Val-186, and 195–199 each bind ATP; these read GED and KMSKS. The 'KMSKS' region signature appears at 195-199; that stretch reads KMSKS.

This sequence belongs to the class-I aminoacyl-tRNA synthetase family. In terms of assembly, homodimer.

The protein localises to the cytoplasm. It carries out the reaction tRNA(Trp) + L-tryptophan + ATP = L-tryptophyl-tRNA(Trp) + AMP + diphosphate + H(+). Its function is as follows. Catalyzes the attachment of tryptophan to tRNA(Trp). The sequence is that of Tryptophan--tRNA ligase from Klebsiella aerogenes (Enterobacter aerogenes).